Here is a 262-residue protein sequence, read N- to C-terminus: Adenosylcobinamide-GDP ribazoletransferase (262 aa).

Helical transmembrane passes span 43–63 (YFGL…WLTQ), 66–86 (LPAG…TGGF), 120–140 (GALA…ELAL), 146–166 (AGSA…SLIF), 191–211 (LFIL…IAAL), and 242–262 (AAQQ…GGIL).

The protein belongs to the CobS family. It depends on Mg(2+) as a cofactor.

The protein localises to the cell inner membrane. The catalysed reaction is alpha-ribazole + adenosylcob(III)inamide-GDP = adenosylcob(III)alamin + GMP + H(+). The enzyme catalyses alpha-ribazole 5'-phosphate + adenosylcob(III)inamide-GDP = adenosylcob(III)alamin 5'-phosphate + GMP + H(+). It functions in the pathway cofactor biosynthesis; adenosylcobalamin biosynthesis; adenosylcobalamin from cob(II)yrinate a,c-diamide: step 7/7. In terms of biological role, joins adenosylcobinamide-GDP and alpha-ribazole to generate adenosylcobalamin (Ado-cobalamin). Also synthesizes adenosylcobalamin 5'-phosphate from adenosylcobinamide-GDP and alpha-ribazole 5'-phosphate. The chain is Adenosylcobinamide-GDP ribazoletransferase from Shewanella oneidensis (strain ATCC 700550 / JCM 31522 / CIP 106686 / LMG 19005 / NCIMB 14063 / MR-1).